The primary structure comprises 270 residues: ATP synthase subunit a (270 aa).

7 helical membrane passes run 29-49 (VDTFSISLVLGFLFAAVFAMV), 87-107 (IAPLALTIFCWVFLMNFMDLF), 108-128 (PVDLFPMAAQWIGYTFFGLEP), 140-160 (DVNATFAMSLSVLILIVGFSI), 182-202 (PVGAIILAPLNFAFQLVELAA), 220-240 (LIFILIALLPWGLQWVLGAPW), and 241-261 (AIFHILIITLQAFVFMMLTIV).

The protein belongs to the ATPase A chain family. As to quaternary structure, F-type ATPases have 2 components, CF(1) - the catalytic core - and CF(0) - the membrane proton channel. CF(1) has five subunits: alpha(3), beta(3), gamma(1), delta(1), epsilon(1). CF(0) has three main subunits: a(1), b(2) and c(9-12). The alpha and beta chains form an alternating ring which encloses part of the gamma chain. CF(1) is attached to CF(0) by a central stalk formed by the gamma and epsilon chains, while a peripheral stalk is formed by the delta and b chains.

The protein localises to the cell inner membrane. In terms of biological role, key component of the proton channel; it plays a direct role in the translocation of protons across the membrane. In Chromobacterium violaceum (strain ATCC 12472 / DSM 30191 / JCM 1249 / CCUG 213 / NBRC 12614 / NCIMB 9131 / NCTC 9757 / MK), this protein is ATP synthase subunit a.